A 179-amino-acid polypeptide reads, in one-letter code: Transcription factor 21 (179 aa).

The tract at residues 19 to 88 is disordered; it reads DCDSLKVDSN…VQRNAANARE (70 aa). 2 stretches are compositionally biased toward polar residues: residues 30–49 and 70–80; these read EFGT…NGSP and SGVSQEGKQVQ. The 53-residue stretch at 79-131 folds into the bHLH domain; the sequence is VQRNAANARERARMRVLSKAFSRLKTTLPWVPPDTKLSKLDTLRLASSYIAHL.

Efficient DNA binding requires dimerization with another bHLH protein. Forms a heterodimer with TCF3 and binds the E box (5'-CANNTG-3'). Expressed at high levels in lung, kidney, gut, heart, ovary and podocytes (visceral glomerular epithelial cells). Also found in spleen, large intestine, uterus, bladder and testis.

The protein resides in the nucleus. Functionally, involved in epithelial-mesenchymal interactions in kidney and lung morphogenesis that include epithelial differentiation and branching morphogenesis. May be involved in the organogenesis of the spleen and heart and in cardiac and coronary artery development. May function in the development and sex differentiation of gonad via transcriptional regulation of AD4BP/SF-1. In Mus musculus (Mouse), this protein is Transcription factor 21 (Tcf21).